A 653-amino-acid chain; its full sequence is Chaperone protein HtpG (653 aa).

Residues 1–361 form an a; substrate-binding region; sequence MSETNQVQNH…SNDLPLNVSR (361 aa). The segment at 362–578 is b; that stretch reads EILQDNKVTQ…DDDMSSQMAK (217 aa). Positions 579-653 are c; the sequence is LMASVGQEVP…LNKLMLSLTK (75 aa).

This sequence belongs to the heat shock protein 90 family. Homodimer.

It is found in the cytoplasm. Its function is as follows. Molecular chaperone. Has ATPase activity. This is Chaperone protein HtpG from Colwellia psychrerythraea (strain 34H / ATCC BAA-681) (Vibrio psychroerythus).